The primary structure comprises 505 residues: Transcription factor VHR2 (505 aa).

Residues Met-1 to His-16 are compositionally biased toward basic and acidic residues. Disordered regions lie at residues Met-1–Gly-23, Asn-105–Pro-179, and Gln-421–Ala-460. The span at Pro-133 to Ser-148 shows a compositional bias: low complexity. Residues Gln-421–Ala-443 are compositionally biased toward polar residues.

The protein belongs to the VHR1 family.

The protein resides in the nucleus. Functionally, transcription factor that regulates ERG9, but seems to have a more global function in transcription. The sequence is that of Transcription factor VHR2 (VHR2) from Saccharomyces cerevisiae (strain ATCC 204508 / S288c) (Baker's yeast).